We begin with the raw amino-acid sequence, 547 residues long: Sodium-coupled neutral amino acid transporter 4 (547 aa).

Residues 1-34 form a disordered region; it reads MDPMELNNVSIEPDGDSCSGDSIQDSYTGMENSD. At 1-104 the chain is on the extracellular side; it reads MDPMELNNVS…GLSYAMANTG (104 aa). Polar residues predominate over residues 19-31; it reads SGDSIQDSYTGME. Ser-49 is subject to Phosphoserine. A helical transmembrane segment spans residues 105–125; sequence IILFIIMLLTVAILSLYSVHL. The Cytoplasmic portion of the chain corresponds to 126–151; sequence LLKTAKEGGSLIYEKLGEKAFGWPGK. Residues 152–172 form a helical membrane-spanning segment; that stretch reads IGAFISITMQNIGAMSSYLFI. At 173–195 the chain is on the extracellular side; sequence IKYELPEVIRAFMGLEENTGEWY. The chain crosses the membrane as a helical span at residues 196 to 216; it reads LNGNYLVLFVSVGIILPLSLL. The Cytoplasmic portion of the chain corresponds to 217 to 220; that stretch reads KNLG. Residues 221–241 traverse the membrane as a helical segment; it reads YLGYTSGFSLSCMVFFVSVVI. Residues 242–332 lie on the Extracellular side of the membrane; sequence YKKFQIPCPL…PKYFVFNSRT (91 aa). A disulfide bridge links Cys-249 with Cys-321. Residues Asn-260, Asn-264, and Asn-276 are each glycosylated (N-linked (GlcNAc...) asparagine). Residues 333-353 form a helical membrane-spanning segment; the sequence is AYAIPILAFAFVCHPEVLPIY. The Cytoplasmic segment spans residues 354 to 369; it reads SELKDRSRRKMQTVSN. The helical transmembrane segment at 370-390 threads the bilayer; sequence ISISGMLVMYLLAALFGYLSF. The Extracellular segment spans residues 391 to 411; that stretch reads YGDVEDELLHAYSKVYTFDTA. The helical transmembrane segment at 412 to 432 threads the bilayer; it reads LLMVRLAVLVAVTLTVPIVLF. The Cytoplasmic segment spans residues 433 to 453; it reads PIRTSVITLLFPRKPFSWLKH. A helical transmembrane segment spans residues 454 to 474; the sequence is FGIAAIIIALNNILVILVPTI. Topologically, residues 475–476 are extracellular; that stretch reads KY. A helical membrane pass occupies residues 477 to 497; that stretch reads IFGFIGASSATMLIFILPAAF. Topologically, residues 498 to 514 are cytoplasmic; the sequence is YLKLVKKEPLRSPQKIG. Residues 515-535 traverse the membrane as a helical segment; that stretch reads ALVFLVTGIIFMMGSMALIIL. Residues 536 to 547 are Extracellular-facing; that stretch reads DWIYNPPNPNHH.

The protein belongs to the amino acid/polyamine transporter 2 family. Post-translationally, the disulfide bond plays an important role in substrate transport, but has no effect on trafficking to the cell surface. As to expression, detected in liver, in hepatocytes surrounding the central vein. Not detected in heart, kidney, brain, lung, small intestine, spleen and thymus. Highly expressed in placenta.

Its subcellular location is the cell membrane. It localises to the cell projection. It is found in the microvillus membrane. The enzyme catalyses L-alanine(in) + Na(+)(in) = L-alanine(out) + Na(+)(out). It carries out the reaction L-methionine(in) + Na(+)(in) = L-methionine(out) + Na(+)(out). It catalyses the reaction L-asparagine(in) + Na(+)(in) = L-asparagine(out) + Na(+)(out). The catalysed reaction is L-threonine(in) + Na(+)(in) = L-threonine(out) + Na(+)(out). The enzyme catalyses L-serine(in) + Na(+)(in) = L-serine(out) + Na(+)(out). It carries out the reaction glycine(in) + Na(+)(in) = glycine(out) + Na(+)(out). It catalyses the reaction L-glutamine(in) + Na(+)(in) = L-glutamine(out) + Na(+)(out). The catalysed reaction is L-histidine(in) + Na(+)(in) = L-histidine(out) + Na(+)(out). The enzyme catalyses L-cysteine(in) + Na(+)(in) = L-cysteine(out) + Na(+)(out). It carries out the reaction L-proline(in) + Na(+)(in) = L-proline(out) + Na(+)(out). In terms of biological role, symporter that cotransports neutral amino acids and sodium ions from the extraccellular to the intracellular side of the cell membrane. The transport is electrogenic, pH dependent and partially tolerates substitution of Na(+) by Li(+). Preferentially transports smaller amino acids, such as glycine, L-alanine, L-serine, L-asparagine and L-threonine, followed by L-cysteine, L-histidine, L-proline and L-glutamine and L-methionine. The polypeptide is Sodium-coupled neutral amino acid transporter 4 (Mus musculus (Mouse)).